Consider the following 120-residue polypeptide: Phosphoribosyl-AMP cyclohydrolase (120 aa).

Asp-75 serves as a coordination point for Mg(2+). Cys-76 is a binding site for Zn(2+). Asp-77 and Asp-79 together coordinate Mg(2+). 2 residues coordinate Zn(2+): Cys-92 and Cys-99.

It belongs to the PRA-CH family. Homodimer. Requires Mg(2+) as cofactor. Zn(2+) serves as cofactor.

It is found in the cytoplasm. It carries out the reaction 1-(5-phospho-beta-D-ribosyl)-5'-AMP + H2O = 1-(5-phospho-beta-D-ribosyl)-5-[(5-phospho-beta-D-ribosylamino)methylideneamino]imidazole-4-carboxamide. It functions in the pathway amino-acid biosynthesis; L-histidine biosynthesis; L-histidine from 5-phospho-alpha-D-ribose 1-diphosphate: step 3/9. Its function is as follows. Catalyzes the hydrolysis of the adenine ring of phosphoribosyl-AMP. This chain is Phosphoribosyl-AMP cyclohydrolase, found in Methanosarcina acetivorans (strain ATCC 35395 / DSM 2834 / JCM 12185 / C2A).